The sequence spans 497 residues: MPNDPSDNQLKTYKETYPKPQVITTSNGAPIYSKTAVLTAGRRGPMLMQDVVYMDEMAHFDRERIPERVVHAKGAGAHGYFEVTHDITKYCKADMFNKVGKQTPLLVRFSTVAGESGSADTVRDPRGFSLKFYTEEGNWDLVGNNTPIFFIRDAIHFPNFIHALKRNPQTHMRDPNALFDFWMNRPESIHQVMFLYSDRGIPDGFRFMNGYGAHTFKMVNKEGNPIYCKFHFKPAQGSKNLDPTDAGKLASSDPDYAIRDLFNAIESRNFPEWKMFIQVMTFEQAEKWEFNPFDVTKVWPHGDYPLIEVGKMVLNRNVKNYFAEVEQAAFCPAHIVPGIEFSPDKMLQGRIFSYTDTHYHRLGPNYIQLPVNCPYRSRAHTTQRDGAMAYESQGDAPNYFPNSFRGYRTRDDVKESTFQTTGDVDRYETGDDHNYEQPRQFWEKVLKEEERDRLVGNLASDLGGCLEEIQNGMVKEFTKVHPDFGNALRHQLCQKKH.

Residues His71 and Asn144 contribute to the active site. Tyr354 is a heme binding site.

Belongs to the catalase family. It depends on heme as a cofactor.

The enzyme catalyses 2 H2O2 = O2 + 2 H2O. Its function is as follows. Catalase involved in the oxidative stress response serving to protect cells from toxicity. For instance plays a role in defending against oxidative damage induced by excessive copper stress. Not required for maintaining normal lifespan. The chain is Catalase-2 from Caenorhabditis elegans.